We begin with the raw amino-acid sequence, 348 residues long: E3 ubiquitin-protein ligase MARCHF9 (348 aa).

Residues Ala48–Ser96 are disordered. The span at Pro63–Arg75 shows a compositional bias: basic and acidic residues. The span at Ala76–Gly90 shows a compositional bias: pro residues. An RING-CH-type zinc finger spans residues Asp102 to Leu162. Residues Cys110, Cys113, Cys126, Cys128, His136, Cys139, Cys152, and Cys155 each contribute to the Zn(2+) site. Transmembrane regions (helical) follow at residues Ile185–Ser205 and Leu219–Val239. Disordered regions lie at residues Gly272 to Arg304 and Pro328 to Val348.

In terms of assembly, homodimer.

The protein localises to the golgi apparatus membrane. It localises to the lysosome membrane. The catalysed reaction is S-ubiquitinyl-[E2 ubiquitin-conjugating enzyme]-L-cysteine + [acceptor protein]-L-lysine = [E2 ubiquitin-conjugating enzyme]-L-cysteine + N(6)-ubiquitinyl-[acceptor protein]-L-lysine.. Its pathway is protein modification; protein ubiquitination. In terms of biological role, E3 ubiquitin-protein ligase that may mediate ubiquitination of MHC-I, CD4 and ICAM1, and promote their subsequent endocytosis and sorting to lysosomes via multivesicular bodies. E3 ubiquitin ligases accept ubiquitin from an E2 ubiquitin-conjugating enzyme in the form of a thioester and then directly transfer the ubiquitin to targeted substrates. This chain is E3 ubiquitin-protein ligase MARCHF9 (Marchf9), found in Mus musculus (Mouse).